The chain runs to 356 residues: MEILEEKPKEGKVKIKVETLDDLWHLYHIITPGDVVYAKTLRKQSQRSDSLRPEKVEVIPVFLGVKVEKINFHKFANQLRVTGPIIYASREDVPLGKYHTIAVEPGTIITLQKERWKPYYIERLKEAVEASKRAKVMIVTIEDGEAEMAIVREYGLDFIATIRHNLGGKRYNIKREDEERKFFHDVAKTMKDVMSRENIQRAIVAGPGFYKEDFYKFLKENYPDLASKIVLDDTSMGGRVGIYEVIKRGTVDKVYSESRIANEIKLVEKVIERIAKDEPVAYGMKEVEEAVNYGAVEILLVLDELLKGDNREKVEELMELARSLRSKVVVVSSEHEGGEKLKALGGIAGILRFKIK.

The protein belongs to the eukaryotic release factor 1 family. Pelota subfamily. In terms of assembly, monomer. The cofactor is a divalent metal cation.

It is found in the cytoplasm. In terms of biological role, may function in recognizing stalled ribosomes, interact with stem-loop structures in stalled mRNA molecules, and effect endonucleolytic cleavage of the mRNA. May play a role in the release non-functional ribosomes and degradation of damaged mRNAs. Has endoribonuclease activity. The protein is Protein pelota homolog of Pyrococcus horikoshii (strain ATCC 700860 / DSM 12428 / JCM 9974 / NBRC 100139 / OT-3).